A 187-amino-acid chain; its full sequence is GTPase KRas (187 aa).

Residues 10–18, 29–35, 59–60, and 116–119 each bind GTP; these read GAVGVGKSA, VDEYDPT, AG, and NKCA. The Effector region signature appears at 32–40; sequence YDPTIEDSY. Residues 168-187 are disordered; sequence EKMSKDGKKKKKSKTKCSIL. A Cysteine methyl ester modification is found at C184. A lipid anchor (S-farnesyl cysteine) is attached at C184. Residues 185–187 constitute a propeptide, removed in mature form; it reads SIL.

This sequence belongs to the small GTPase superfamily. Ras family.

The protein localises to the cell membrane. It is found in the cytoplasm. It catalyses the reaction GTP + H2O = GDP + phosphate + H(+). Alternates between an inactive form bound to GDP and an active form bound to GTP. Activated by a guanine nucleotide-exchange factor (GEF) and inactivated by a GTPase-activating protein (GAP). Functionally, ras proteins bind GDP/GTP and possess intrinsic GTPase activity. Plays an important role in the regulation of cell proliferation. In Xenopus laevis (African clawed frog), this protein is GTPase KRas (kras).